We begin with the raw amino-acid sequence, 376 residues long: 1-deoxy-D-xylulose 5-phosphate reductoisomerase (376 aa).

Positions 12, 13, 14, 15, 39, 40, and 110 each coordinate NADPH. Lys111 serves as a coordination point for 1-deoxy-D-xylulose 5-phosphate. Position 112 (Glu112) interacts with NADPH. Residue Asp136 coordinates Mn(2+). 1-deoxy-D-xylulose 5-phosphate contacts are provided by Ser137, Glu138, Ser162, and His185. Glu138 provides a ligand contact to Mn(2+). Residue Gly191 coordinates NADPH. 1-deoxy-D-xylulose 5-phosphate-binding residues include Ser198, Asn203, Lys204, and Glu207. Glu207 is a Mn(2+) binding site.

It belongs to the DXR family. Mg(2+) is required as a cofactor. The cofactor is Mn(2+).

It catalyses the reaction 2-C-methyl-D-erythritol 4-phosphate + NADP(+) = 1-deoxy-D-xylulose 5-phosphate + NADPH + H(+). It functions in the pathway isoprenoid biosynthesis; isopentenyl diphosphate biosynthesis via DXP pathway; isopentenyl diphosphate from 1-deoxy-D-xylulose 5-phosphate: step 1/6. In terms of biological role, catalyzes the NADPH-dependent rearrangement and reduction of 1-deoxy-D-xylulose-5-phosphate (DXP) to 2-C-methyl-D-erythritol 4-phosphate (MEP). In Treponema pallidum (strain Nichols), this protein is 1-deoxy-D-xylulose 5-phosphate reductoisomerase.